The chain runs to 87 residues: MVNTKASMFLTFAGLVLLFVVCYASESEEKEFPKEMLSSIFAVDNDFKQEERDCAGYMRECKEKLCCSGYVCSSRWKWCVLPAPWRR.

The N-terminal stretch at Met1–Ala24 is a signal peptide. A propeptide spanning residues Ser25 to Arg52 is cleaved from the precursor. 3 disulfide bridges follow: Cys54–Cys67, Cys61–Cys72, and Cys66–Cys79.

Belongs to the neurotoxin 10 (Hwtx-1) family. 51 (Hntx-8) subfamily. Hntx-8 sub-subfamily. In terms of tissue distribution, expressed by the venom gland.

It localises to the secreted. Functionally, ion channel inhibitor. This Cyriopagopus hainanus (Chinese bird spider) protein is U3-theraphotoxin-Hhn1a 18.